The sequence spans 381 residues: 2-methylcitrate synthase 1 (381 aa).

A substrate-binding site is contributed by histidine 192. The active site involves histidine 227. A CoA-binding site is contributed by 260 to 264; the sequence is RIMGF. Histidine 266 is a catalytic residue. Residue arginine 275 participates in substrate binding. Aspartate 317 is an active-site residue. Arginine 342 and arginine 361 together coordinate substrate.

Belongs to the citrate synthase family. As to quaternary structure, homodimer.

It carries out the reaction propanoyl-CoA + oxaloacetate + H2O = (2S,3S)-2-methylcitrate + CoA + H(+). It catalyses the reaction oxaloacetate + acetyl-CoA + H2O = citrate + CoA + H(+). Its pathway is carbohydrate metabolism; tricarboxylic acid cycle. Its function is as follows. Catalyzes the Claisen condensation of propionyl-CoA and oxaloacetate (OAA) to yield 2-methylcitrate (2-MC) and CoA. Also catalyzes the condensation of oxaloacetate with propionyl-CoA but with a lower specificity. This Corynebacterium glutamicum (strain ATCC 13032 / DSM 20300 / JCM 1318 / BCRC 11384 / CCUG 27702 / LMG 3730 / NBRC 12168 / NCIMB 10025 / NRRL B-2784 / 534) protein is 2-methylcitrate synthase 1 (prpC1).